Here is a 481-residue protein sequence, read N- to C-terminus: Aspartyl/glutamyl-tRNA(Asn/Gln) amidotransferase subunit B (481 aa).

This sequence belongs to the GatB/GatE family. GatB subfamily. In terms of assembly, heterotrimer of A, B and C subunits.

It catalyses the reaction L-glutamyl-tRNA(Gln) + L-glutamine + ATP + H2O = L-glutaminyl-tRNA(Gln) + L-glutamate + ADP + phosphate + H(+). The enzyme catalyses L-aspartyl-tRNA(Asn) + L-glutamine + ATP + H2O = L-asparaginyl-tRNA(Asn) + L-glutamate + ADP + phosphate + 2 H(+). Allows the formation of correctly charged Asn-tRNA(Asn) or Gln-tRNA(Gln) through the transamidation of misacylated Asp-tRNA(Asn) or Glu-tRNA(Gln) in organisms which lack either or both of asparaginyl-tRNA or glutaminyl-tRNA synthetases. The reaction takes place in the presence of glutamine and ATP through an activated phospho-Asp-tRNA(Asn) or phospho-Glu-tRNA(Gln). This is Aspartyl/glutamyl-tRNA(Asn/Gln) amidotransferase subunit B from Pseudomonas putida (strain ATCC 700007 / DSM 6899 / JCM 31910 / BCRC 17059 / LMG 24140 / F1).